The following is a 432-amino-acid chain: RNA binding protein fox-1 homolog 2 (432 aa).

Positions 1–21 are enriched in low complexity; it reads MAEGGQAQQQPPQLGPGAAAR. Residues 1-169 form a disordered region; the sequence is MAEGGQAQQQ…STPKRLHVSN (169 aa). 2 stretches are compositionally biased toward polar residues: residues 60-69 and 101-121; these read QGNQEPTTTP and YAGQ…PHGE. Low complexity predominate over residues 122–159; the sequence is QSSNSPSNQNGSLTQTEGGAQTDGQQSQTQSSENSESK. The 77-residue stretch at 163–239 folds into the RRM domain; the sequence is KRLHVSNIPF…RKIEVNNATA (77 aa). Arginine 323 bears the Omega-N-methylarginine mark. Arginine 339 and arginine 371 each carry asymmetric dimethylarginine. 2 positions are modified to asymmetric dimethylarginine; alternate: arginine 423 and arginine 428. An omega-N-methylarginine; alternate mark is found at arginine 423 and arginine 428.

As to quaternary structure, interacts with ER-alpha N-terminal activation domain. Interacts with RBPMS; the interaction allows cooperative assembly of stable cell-specific alternative splicing regulatory complexes.

The protein localises to the nucleus. Its subcellular location is the cytoplasm. Functionally, RNA-binding protein that regulates alternative splicing events by binding to 5'-UGCAUGU-3' elements. Prevents binding of U2AF2 to the 3'-splice site. Regulates alternative splicing of tissue-specific exons and of differentially spliced exons during erythropoiesis. Seems to act as a coregulatory factor of ER-alpha. Together with RNA binding proteins RBPMS and MBNL1/2, activates vascular smooth muscle cells alternative splicing events. This is RNA binding protein fox-1 homolog 2 (Rbfox2) from Rattus norvegicus (Rat).